The chain runs to 448 residues: MFKARIRGIYATALTKLALDWGFEIVQPTQQIINRFGLKPDYSPPDITVKDHESKTGVVTIGECQAVDYFLERLRQYVDPVIAKASAGLHDVFIGRVVGEGLVEAPGGQLMEVPRRYVVQPGSTSVFTVVKPPMGPFRGVAVPEIVVEGKLLELNTTGRVSYSRHIAEQERLRLRILAETKLKNYASIGLRFKSSAKYASEDELAKEAEELYKEMLKISQGGPPGTLLRRGKCIAVVLFDRQAKFKLDEARAAVVPTIRGHHALRGQGLGKCLDLLDYAGADVYEKAVEFLARGRVVIYHVKPWGEVIKMRGEVVKISDDVLVVKRPLRPGGVLDGIGAKIEPGTYALTCVPKSGGYVVHSYYSASGVYLGTYVNINTDPEWGRRIIYIDLLVDKAYGLDGVERVLDADELQRYAHMLPERLRRPEAPGGKICTSEGLTSALPQSSSA.

Positions Glu426–Ala448 are disordered. Positions Glu436–Ala448 are enriched in polar residues.

Belongs to the FAU-1 family.

In terms of biological role, probable RNase involved in rRNA stability through maturation and/or degradation of precursor rRNAs. Binds to RNA in loop regions with AU-rich sequences. This Pyrobaculum islandicum (strain DSM 4184 / JCM 9189 / GEO3) protein is Probable ribonuclease FAU-1.